We begin with the raw amino-acid sequence, 60 residues long: UPF0434 protein ESA_02427 (60 aa).

The protein belongs to the UPF0434 family.

This Cronobacter sakazakii (strain ATCC BAA-894) (Enterobacter sakazakii) protein is UPF0434 protein ESA_02427.